The chain runs to 718 residues: Catalase-peroxidase (718 aa).

Residues 98–219 constitute a cross-link (tryptophyl-tyrosyl-methioninium (Trp-Tyr) (with M-245)); that stretch reads WHAAGTYRMG…LAATEMGLIY (122 aa). The active-site Proton acceptor is His-99. Residues 219–245 constitute a cross-link (tryptophyl-tyrosyl-methioninium (Tyr-Met) (with W-98)); that stretch reads YVNPEGPQASGDPRSAAPFIRATFGNM. A heme b-binding site is contributed by His-260.

The protein belongs to the peroxidase family. Peroxidase/catalase subfamily. As to quaternary structure, homodimer or homotetramer. It depends on heme b as a cofactor. Formation of the three residue Trp-Tyr-Met cross-link is important for the catalase, but not the peroxidase activity of the enzyme.

The enzyme catalyses H2O2 + AH2 = A + 2 H2O. The catalysed reaction is 2 H2O2 = O2 + 2 H2O. Functionally, bifunctional enzyme with both catalase and broad-spectrum peroxidase activity. This is Catalase-peroxidase from Acinetobacter baumannii (strain ACICU).